Consider the following 445-residue polypeptide: Tubulin alpha-1 chain (445 aa).

Gln-11 contacts GTP. Residue Lys-40 is modified to N6-acetyllysine. Residues Glu-71, Ser-140, Gly-144, Thr-145, Thr-179, Asn-206, and Asn-228 each contribute to the GTP site. Glu-71 is a Mg(2+) binding site. The active site involves Glu-254.

The protein belongs to the tubulin family. Dimer of alpha and beta chains. A typical microtubule is a hollow water-filled tube with an outer diameter of 25 nm and an inner diameter of 15 nM. Alpha-beta heterodimers associate head-to-tail to form protofilaments running lengthwise along the microtubule wall with the beta-tubulin subunit facing the microtubule plus end conferring a structural polarity. Microtubules usually have 13 protofilaments but different protofilament numbers can be found in some organisms and specialized cells. Mg(2+) serves as cofactor. Post-translationally, acetylation of alpha chains at Lys-40 stabilizes microtubules and affects affinity and processivity of microtubule motors. This modification has a role in multiple cellular functions, ranging from cell motility, cell cycle progression or cell differentiation to intracellular trafficking and signaling.

The protein localises to the cytoplasm. The protein resides in the cytoskeleton. It catalyses the reaction GTP + H2O = GDP + phosphate + H(+). Functionally, tubulin is the major constituent of microtubules, a cylinder consisting of laterally associated linear protofilaments composed of alpha- and beta-tubulin heterodimers. Microtubules grow by the addition of GTP-tubulin dimers to the microtubule end, where a stabilizing cap forms. Below the cap, tubulin dimers are in GDP-bound state, owing to GTPase activity of alpha-tubulin. The chain is Tubulin alpha-1 chain from Stylonychia lemnae (Ciliate).